Consider the following 619-residue polypeptide: Teichoic acid poly(ribitol-phosphate) polymerase (619 aa).

Belongs to the CDP-glycerol glycerophosphotransferase family.

The protein localises to the cell membrane. It carries out the reaction 4-O-[1-D-ribitylphospho-(2R)-1-glycerylphospho]-N-acetyl-beta-D-mannosaminyl-(1-&gt;4)-N-acetyl-alpha-D-glucosaminyl di-trans,octa-cis-undecaprenyl diphosphate + n CDP-L-ribitol = 4-O-[(D-ribitylphospho)(n)-D-ribitylphospho-(2R)-glycerylphospho]-N-acetyl-beta-D-mannosaminyl-(1-&gt;4)-N-acetyl-alpha-D-glucosaminyl di-trans,octa-cis-undecaprenyl diphosphate + n CMP + n H(+). The protein operates within cell wall biogenesis; poly(ribitol phosphate) teichoic acid biosynthesis. In terms of biological role, responsible for the polymerization of the main chain of the major teichoic acid by sequential transfer of ribitol phosphate units from CDP-ribitol to the glycerol phosphate attached to the disaccharide linkage unit. Synthesizes polymers of up to 40 ribitol phosphate units in length. This is Teichoic acid poly(ribitol-phosphate) polymerase (tarL) from Bacillus spizizenii (strain ATCC 23059 / NRRL B-14472 / W23) (Bacillus subtilis subsp. spizizenii).